The primary structure comprises 152 residues: ADP-ribose glycohydrolase OARD1 (152 aa).

Ala-2 carries the N-acetylalanine modification. In terms of domain architecture, Macro spans 2–152 (AGSPNEDSEG…TDIRITVYTL (151 aa)). Ser-4 bears the Phosphoserine mark. Leu-21 is a binding site for substrate. The active-site Nucleophile is the Lys-84. Residues 119-125 (RIGCGLD) and Leu-152 contribute to the substrate site. Asp-125 serves as the catalytic Proton acceptor.

The protein resides in the nucleus. It is found in the nucleoplasm. It localises to the nucleolus. The protein localises to the chromosome. The enzyme catalyses 2''-O-acetyl-ADP-D-ribose + H2O = ADP-D-ribose + acetate + H(+). The catalysed reaction is 5-O-(ADP-D-ribosyl)-L-glutamyl-[protein] + H2O = L-glutamyl-[protein] + ADP-D-ribose + H(+). It carries out the reaction alpha-NAD(+) + H2O = ADP-D-ribose + nicotinamide + H(+). Its activity is regulated as follows. Subject to competitive inhibition by the product ADP-ribose. ADP-ribose glycohydrolase that hydrolyzes ADP-ribose and acts on different substrates, such as proteins ADP-ribosylated on glutamate and O-acetyl-ADP-D-ribose. Specifically acts as a glutamate mono-ADP-ribosylhydrolase by mediating the removal of mono-ADP-ribose attached to glutamate residues on proteins. Does not act on poly-ADP-ribosylated proteins: the poly-ADP-ribose chain of poly-ADP-ribosylated glutamate residues must by hydrolyzed into mono-ADP-ribosylated glutamate by PARG to become a substrate for OARD1. Deacetylates O-acetyl-ADP ribose, a signaling molecule generated by the deacetylation of acetylated lysine residues in histones and other proteins. Catalyzes the deacylation of O-acetyl-ADP-ribose, O-propionyl-ADP-ribose and O-butyryl-ADP-ribose, yielding ADP-ribose plus acetate, propionate and butyrate, respectively. This Bos taurus (Bovine) protein is ADP-ribose glycohydrolase OARD1.